A 968-amino-acid polypeptide reads, in one-letter code: Isoleucine--tRNA ligase (968 aa).

Residues 68 to 78 (PYANGALHMGH) carry the 'HIGH' region motif. Glu584 serves as a coordination point for L-isoleucyl-5'-AMP. The 'KMSKS' region motif lies at 625–629 (KMSKS). An ATP-binding site is contributed by Lys628. Zn(2+) contacts are provided by Cys938, Cys941, Cys958, and Cys961.

This sequence belongs to the class-I aminoacyl-tRNA synthetase family. IleS type 1 subfamily. Monomer. Requires Zn(2+) as cofactor.

The protein resides in the cytoplasm. The catalysed reaction is tRNA(Ile) + L-isoleucine + ATP = L-isoleucyl-tRNA(Ile) + AMP + diphosphate. Catalyzes the attachment of isoleucine to tRNA(Ile). As IleRS can inadvertently accommodate and process structurally similar amino acids such as valine, to avoid such errors it has two additional distinct tRNA(Ile)-dependent editing activities. One activity is designated as 'pretransfer' editing and involves the hydrolysis of activated Val-AMP. The other activity is designated 'posttransfer' editing and involves deacylation of mischarged Val-tRNA(Ile). The sequence is that of Isoleucine--tRNA ligase from Synechococcus sp. (strain CC9311).